We begin with the raw amino-acid sequence, 660 residues long: Elongation factor 4 (660 aa).

Positions 55-241 (AQIRNFCIIA…EVVRQVPPPQ (187 aa)) constitute a tr-type G domain. Residues 67-72 (DHGKST) and 188-191 (NKID) contribute to the GTP site.

The protein belongs to the TRAFAC class translation factor GTPase superfamily. Classic translation factor GTPase family. LepA subfamily.

It is found in the cell membrane. The enzyme catalyses GTP + H2O = GDP + phosphate + H(+). Functionally, required for accurate and efficient protein synthesis under certain stress conditions. May act as a fidelity factor of the translation reaction, by catalyzing a one-codon backward translocation of tRNAs on improperly translocated ribosomes. Back-translocation proceeds from a post-translocation (POST) complex to a pre-translocation (PRE) complex, thus giving elongation factor G a second chance to translocate the tRNAs correctly. Binds to ribosomes in a GTP-dependent manner. This is Elongation factor 4 from Mycolicibacterium paratuberculosis (strain ATCC BAA-968 / K-10) (Mycobacterium paratuberculosis).